The primary structure comprises 489 residues: Probable serine protease EDA2 (489 aa).

The signal sequence occupies residues 1–25; it reads MSLEFGFILINIFTAIVSFSTLSHA. 3 N-linked (GlcNAc...) asparagine glycosylation sites follow: asparagine 35, asparagine 51, and asparagine 162. Serine 178 functions as the Charge relay system in the catalytic mechanism. Residues asparagine 253, asparagine 293, asparagine 365, and asparagine 406 are each glycosylated (N-linked (GlcNAc...) asparagine). Aspartate 410 (charge relay system) is an active-site residue. An N-linked (GlcNAc...) asparagine glycan is attached at asparagine 419. Residue histidine 436 is the Charge relay system of the active site. Residue asparagine 456 is glycosylated (N-linked (GlcNAc...) asparagine).

This sequence belongs to the peptidase S28 family.

The protein localises to the secreted. Its function is as follows. May be involved in a proteolytic pathway controlling the nuclear division phase of megagametogenesis. This Arabidopsis thaliana (Mouse-ear cress) protein is Probable serine protease EDA2 (EDA2).